Reading from the N-terminus, the 154-residue chain is Anaerobic ribonucleoside-triphosphate reductase-activating protein (154 aa).

[4Fe-4S] cluster is bound by residues cysteine 26, cysteine 30, and cysteine 33. Residues 32–34 and glycine 74 contribute to the S-adenosyl-L-methionine site; that span reads GCY.

Belongs to the organic radical-activating enzymes family. Forms a tetramer composed of two NrdD and two NrdG subunits. It depends on [4Fe-4S] cluster as a cofactor.

It localises to the cytoplasm. It carries out the reaction glycyl-[protein] + reduced [flavodoxin] + S-adenosyl-L-methionine = glycin-2-yl radical-[protein] + semiquinone [flavodoxin] + 5'-deoxyadenosine + L-methionine + H(+). Its function is as follows. Activation of anaerobic ribonucleoside-triphosphate reductase under anaerobic conditions by generation of an organic free radical, using S-adenosylmethionine and reduced flavodoxin as cosubstrates to produce 5'-deoxy-adenosine. The chain is Anaerobic ribonucleoside-triphosphate reductase-activating protein (nrdG) from Escherichia coli O157:H7.